A 189-amino-acid polypeptide reads, in one-letter code: Cancer/testis antigen family 45 member A1 (189 aa).

The span at 1–23 shows a compositional bias: basic and acidic residues; that stretch reads MTDKTEKVAVDPETVFKRPRECD. 2 disordered regions span residues 1-27 and 83-118; these read MTDKTEKVAVDPETVFKRPRECDSPSY and RMMQKPGSNAPVGGNVTSSFSGDDLECRETASSPKS.

Belongs to the CT45 family. As to expression, testis specific. Expressed in cancer cell lines.

It is found in the nucleus. This chain is Cancer/testis antigen family 45 member A1, found in Homo sapiens (Human).